Here is a 468-residue protein sequence, read N- to C-terminus: UDP-N-acetylmuramoyl-L-alanine--L-glutamate ligase (468 aa).

122–128 is an ATP binding site; it reads GTKGKST.

It belongs to the MurCDEF family. MurD2 subfamily.

Its subcellular location is the cytoplasm. The enzyme catalyses UDP-N-acetyl-alpha-D-muramoyl-L-alanine + L-glutamate + ATP = UDP-N-acetyl-alpha-D-muramoyl-L-alanyl-L-glutamate + ADP + phosphate + H(+). The protein operates within cell wall biogenesis; peptidoglycan biosynthesis. Cell wall formation. Catalyzes the addition of L-glutamate to the nucleotide precursor UDP-N-acetylmuramoyl-L-alanine. This Xanthomonas campestris pv. campestris (strain 8004) protein is UDP-N-acetylmuramoyl-L-alanine--L-glutamate ligase.